The sequence spans 830 residues: uncharacterized protein (830 aa).

Residues M1 to V12 are compositionally biased toward basic and acidic residues. Residues M1–T61 are disordered. The segment covering A15–V25 has biased composition (polar residues). Residues T249–N433 enclose the Helicase ATP-binding domain. D262–T269 lines the ATP pocket. The short motif at D384–H387 is the DEAH box element. The 155-residue stretch at E662–T816 folds into the Helicase C-terminal domain. Phosphoserine is present on S712.

The protein belongs to the SNF2/RAD54 helicase family.

It is found in the nucleus. This is an uncharacterized protein from Schizosaccharomyces pombe (strain 972 / ATCC 24843) (Fission yeast).